Here is a 381-residue protein sequence, read N- to C-terminus: uncharacterized protein (381 aa).

Disordered stretches follow at residues 1–20 and 36–381; these read MPYYTRDDNDVDDFDEFDPT and IPPS…EDDE. The span at 9–18 shows a compositional bias: acidic residues; that stretch reads NDVDDFDEFD. Composition is skewed to basic and acidic residues over residues 166–175 and 186–237; these read TEVEYGRRPE and SESE…EGYR. Residues Ser-339, Ser-346, and Ser-357 each carry the phosphoserine modification. Basic residues predominate over residues 364–374; the sequence is KKHRHKHHHQK.

This is an uncharacterized protein from Arabidopsis thaliana (Mouse-ear cress).